A 546-amino-acid polypeptide reads, in one-letter code: Chaperonin GroEL 1 (546 aa).

Residues 30–33, K51, 87–91, G415, and D495 each bind ATP; these read TLGP and DGTTT. Residues 527-546 are disordered; sequence DAAPTAAPGGPGAGGPGFDF. Positions 535–546 are enriched in gly residues; the sequence is GGPGAGGPGFDF.

Belongs to the chaperonin (HSP60) family. In terms of assembly, forms a cylinder of 14 subunits composed of two heptameric rings stacked back-to-back. Interacts with the co-chaperonin GroES.

It is found in the cytoplasm. It catalyses the reaction ATP + H2O + a folded polypeptide = ADP + phosphate + an unfolded polypeptide.. Its function is as follows. Together with its co-chaperonin GroES, plays an essential role in assisting protein folding. The GroEL-GroES system forms a nano-cage that allows encapsulation of the non-native substrate proteins and provides a physical environment optimized to promote and accelerate protein folding. The chain is Chaperonin GroEL 1 from Burkholderia lata (strain ATCC 17760 / DSM 23089 / LMG 22485 / NCIMB 9086 / R18194 / 383).